Reading from the N-terminus, the 159-residue chain is Endoribonuclease YbeY (159 aa).

3 residues coordinate Zn(2+): His120, His124, and His130.

It belongs to the endoribonuclease YbeY family. Zn(2+) serves as cofactor.

The protein localises to the cytoplasm. Its function is as follows. Single strand-specific metallo-endoribonuclease involved in late-stage 70S ribosome quality control and in maturation of the 3' terminus of the 16S rRNA. This is Endoribonuclease YbeY from Parafrankia sp. (strain EAN1pec).